The primary structure comprises 111 residues: Cytochrome c6-like (111 aa).

The N-terminal stretch at 1 to 25 (MQKFLKLVLVTFLFLISTLTPPANA) is a signal peptide. 4 residues coordinate heme c: cysteine 39, cysteine 42, histidine 43, and methionine 83.

The protein belongs to the cytochrome c family. PetJ subfamily. Post-translationally, binds 1 heme c group covalently per subunit.

The protein localises to the cellular thylakoid lumen. This is Cytochrome c6-like from Nostoc sp. (strain PCC 7120 / SAG 25.82 / UTEX 2576).